A 396-amino-acid chain; its full sequence is S-adenosylmethionine synthase (396 aa).

His-14 contacts ATP. Asp-16 contacts Mg(2+). Glu-42 is a K(+) binding site. L-methionine contacts are provided by Glu-55 and Gln-98. Residues 98–108 (QSPDIALGVNK) are flexible loop. ATP is bound by residues 174–176 (DGK), 241–242 (RF), Asp-250, 256–257 (RK), Ala-273, and Lys-277. Position 250 (Asp-250) interacts with L-methionine. An L-methionine-binding site is contributed by Lys-281.

It belongs to the AdoMet synthase family. In terms of assembly, homotetramer; dimer of dimers. Mg(2+) serves as cofactor. Requires K(+) as cofactor.

The protein localises to the cytoplasm. The catalysed reaction is L-methionine + ATP + H2O = S-adenosyl-L-methionine + phosphate + diphosphate. The protein operates within amino-acid biosynthesis; S-adenosyl-L-methionine biosynthesis; S-adenosyl-L-methionine from L-methionine: step 1/1. Catalyzes the formation of S-adenosylmethionine (AdoMet) from methionine and ATP. The overall synthetic reaction is composed of two sequential steps, AdoMet formation and the subsequent tripolyphosphate hydrolysis which occurs prior to release of AdoMet from the enzyme. In Pseudothermotoga lettingae (strain ATCC BAA-301 / DSM 14385 / NBRC 107922 / TMO) (Thermotoga lettingae), this protein is S-adenosylmethionine synthase.